A 1217-amino-acid chain; its full sequence is ATP-dependent helicase/nuclease subunit A (1217 aa).

Residues 10 to 475 (VIWTDAQWQS…IDLSQNFRSR (466 aa)) form the UvrD-like helicase ATP-binding domain. ATP is bound at residue 31 to 38 (AAAGSGKT). Residues 476 to 786 (KEVLSTTNYI…RMMTIHSSKG (311 aa)) form the UvrD-like helicase C-terminal domain.

It belongs to the helicase family. AddA subfamily. As to quaternary structure, heterodimer of AddA and AddB/RexB. Mg(2+) is required as a cofactor.

The enzyme catalyses Couples ATP hydrolysis with the unwinding of duplex DNA by translocating in the 3'-5' direction.. It catalyses the reaction ATP + H2O = ADP + phosphate + H(+). In terms of biological role, the heterodimer acts as both an ATP-dependent DNA helicase and an ATP-dependent, dual-direction single-stranded exonuclease. Recognizes the chi site generating a DNA molecule suitable for the initiation of homologous recombination. The AddA nuclease domain is required for chi fragment generation; this subunit has the helicase and 3' -&gt; 5' nuclease activities. This is ATP-dependent helicase/nuclease subunit A from Staphylococcus aureus (strain MSSA476).